We begin with the raw amino-acid sequence, 489 residues long: Dentin matrix acidic phosphoprotein 1 (489 aa).

The first 16 residues, 1–16, serve as a signal peptide directing secretion; it reads MKTVILLTFLWGLSCA. Residues 22–489 are disordered; it reads YQNTESESSE…QDDNDCQDGY (468 aa). Over residues 82 to 100 the composition is skewed to acidic residues; that stretch reads DKEEDEDDSGDDTFGDEDN. Over residues 123-138 the composition is skewed to low complexity; the sequence is DTTQSSEDSTSQENSA. Basic and acidic residues-rich tracts occupy residues 143-159 and 217-227; these read SDSK…RPEA and RSEESKGDHEP. A compositionally biased stretch (polar residues) spans 263 to 274; it reads DSNSRETQSVST. The segment covering 275–287 has biased composition (basic and acidic residues); that stretch reads EDFRSKEESRSET. Over residues 316–332 the composition is skewed to low complexity; that stretch reads EPSQESSSESQEGVASE. The Cell attachment site signature appears at 334 to 336; that stretch reads RGD. An N-linked (GlcNAc...) asparagine glycan is attached at Asn340. The segment covering 346 to 358 has biased composition (basic and acidic residues); sequence DQRDSESSEEDRL. Asn378 is a glycosylation site (N-linked (GlcNAc...) asparagine). Residues 386-397 are compositionally biased toward acidic residues; sequence ESQESAQDEDSS. Residues 398-419 show a composition bias toward low complexity; the sequence is SQEGLQSQSASRESRSQESQSE. Basic and acidic residues predominate over residues 420-442; sequence QDSRSEENRDSDSQDSSRSKEES. A glycan (N-linked (GlcNAc...) asparagine) is linked at Asn443. Basic and acidic residues predominate over residues 453–478; it reads EDNHPKNIEADNRKLIVDAYHNKPIG. Residues 479–489 show a composition bias toward acidic residues; that stretch reads DQDDNDCQDGY.

As to quaternary structure, interacts with importin alpha. Post-translationally, phosphorylated in the cytosol and extracellular matrix and unphosphorylated in the nucleus. Phosphorylation is necessary for nucleocytoplasmic transport and may be catalyzed by a nuclear isoform of CK2 and can be augmented by calcium. Phosphorylated (in vitro) by FAM20C in the extracellular medium at sites within the S-x-E/pS motif. As to expression, expressed in tooth particularly in odontoblast and ameloblast.

The protein resides in the nucleus. The protein localises to the cytoplasm. Its subcellular location is the secreted. It is found in the extracellular space. It localises to the extracellular matrix. In terms of biological role, may have a dual function during osteoblast differentiation. In the nucleus of undifferentiated osteoblasts, unphosphorylated form acts as a transcriptional component for activation of osteoblast-specific genes like osteocalcin. During the osteoblast to osteocyte transition phase it is phosphorylated and exported into the extracellular matrix, where it regulates nucleation of hydroxyapatite. This chain is Dentin matrix acidic phosphoprotein 1 (Dmp1), found in Rattus norvegicus (Rat).